Here is a 535-residue protein sequence, read N- to C-terminus: NAD(P)H-quinone oxidoreductase chain 4 2 (535 aa).

14 helical membrane passes run 9 to 29 (FPWL…IPLI), 51 to 71 (WFAL…FYVG), 106 to 126 (LILL…PVTL), 130 to 150 (LFYF…AVQD), 152 to 172 (LLFF…LSIW), 184 to 204 (FILY…AMAF), 227 to 247 (LLLY…FPLH), 258 to 278 (TAPV…YALM), 290 to 310 (LYFA…AALT), 326 to 346 (ISHM…GMSG), 347 to 367 (AMLQ…LVGA), 399 to 419 (LASL…VFIG), 432 to 452 (LVVV…LLSM), and 479 to 499 (VFII…PKLV).

It belongs to the complex I subunit 4 family.

It localises to the cellular thylakoid membrane. The enzyme catalyses a plastoquinone + NADH + (n+1) H(+)(in) = a plastoquinol + NAD(+) + n H(+)(out). It carries out the reaction a plastoquinone + NADPH + (n+1) H(+)(in) = a plastoquinol + NADP(+) + n H(+)(out). In terms of biological role, NDH-1 shuttles electrons from NAD(P)H, via FMN and iron-sulfur (Fe-S) centers, to quinones in the respiratory chain. The immediate electron acceptor for the enzyme in this species is believed to be plastoquinone. Couples the redox reaction to proton translocation (for every two electrons transferred, four hydrogen ions are translocated across the cytoplasmic membrane), and thus conserves the redox energy in a proton gradient. In Synechococcus sp. (strain JA-3-3Ab) (Cyanobacteria bacterium Yellowstone A-Prime), this protein is NAD(P)H-quinone oxidoreductase chain 4 2.